The sequence spans 268 residues: tRNA (guanine-N(1)-)-methyltransferase (268 aa).

Residues Gly113 and 133-138 (IGDYVL) contribute to the S-adenosyl-L-methionine site. A disordered region spans residues 238–268 (RCPPDPFAHQGPVYEGDQLERPEGGEQGASR).

Belongs to the RNA methyltransferase TrmD family. Homodimer.

The protein localises to the cytoplasm. It carries out the reaction guanosine(37) in tRNA + S-adenosyl-L-methionine = N(1)-methylguanosine(37) in tRNA + S-adenosyl-L-homocysteine + H(+). Functionally, specifically methylates guanosine-37 in various tRNAs. The protein is tRNA (guanine-N(1)-)-methyltransferase of Thermomicrobium roseum (strain ATCC 27502 / DSM 5159 / P-2).